The chain runs to 284 residues: Insulin-like growth factor-binding protein 2 (284 aa).

The N-terminal stretch at 1–21 (MGLSRYLLGLLLGVLCTPAPA) is a signal peptide. Residues 23-106 (VLFRCPPCSP…VLGLGTCGKR (84 aa)) enclose the IGFBP N-terminal domain. 6 disulfide bridges follow: C27/C56, C30/C58, C38/C59, C47/C62, C70/C83, and C77/C103. Residues 108–184 (DTEYGSSQER…KSEDKKRPAR (77 aa)) form a disordered region. Residues 117-127 (RGTELPEERSD) show a composition bias toward basic and acidic residues. Positions 136–145 (EAGPAVAGEA) are enriched in low complexity. A compositionally biased stretch (basic and acidic residues) spans 152–180 (KKEMKEIAVTRERANEQQRSKSNKSEDKK). Positions 184 to 266 (RSLCQLQLDQ…SPTIRGDPEC (83 aa)) constitute a Thyroglobulin type-1 domain. Disulfide bonds link C187/C221, C232/C243, and C245/C266. The short motif at 261 to 263 (RGD) is the Cell attachment site element.

As to quaternary structure, interacts with igf1 and igf2.

The protein localises to the secreted. Its function is as follows. IGF-binding proteins prolong the half-life of the IGFs and have been shown to either inhibit or stimulate the growth promoting effects of the IGFs on cell culture. They alter the interaction of IGFs with their cell surface receptors. This Xenopus tropicalis (Western clawed frog) protein is Insulin-like growth factor-binding protein 2.